Reading from the N-terminus, the 276-residue chain is 2-dehydro-3-deoxyphosphooctonate aldolase (276 aa).

Belongs to the KdsA family.

The protein localises to the cytoplasm. It catalyses the reaction D-arabinose 5-phosphate + phosphoenolpyruvate + H2O = 3-deoxy-alpha-D-manno-2-octulosonate-8-phosphate + phosphate. It functions in the pathway carbohydrate biosynthesis; 3-deoxy-D-manno-octulosonate biosynthesis; 3-deoxy-D-manno-octulosonate from D-ribulose 5-phosphate: step 2/3. Its pathway is bacterial outer membrane biogenesis; lipopolysaccharide biosynthesis. This chain is 2-dehydro-3-deoxyphosphooctonate aldolase, found in Xylella fastidiosa (strain M23).